A 359-amino-acid polypeptide reads, in one-letter code: Double-stranded RNA-binding protein 3 (359 aa).

2 DRBM domains span residues 1–70 (MYKN…ALSS) and 87–155 (IYKN…SLRK). Basic and acidic residues predominate over residues 266-280 (EKKQSLDDPKPEMRI). 2 disordered regions span residues 266 to 292 (EKKQSLDDPKPEMRIKTSSPSPLSSSV) and 328 to 359 (APPPKPNPNPNSSPFITRELGNGSQEKKSLPN). Residues 328–338 (APPPKPNPNPN) are compositionally biased toward pro residues.

Functionally, binds double-stranded RNA. In Arabidopsis thaliana (Mouse-ear cress), this protein is Double-stranded RNA-binding protein 3 (DRB3).